The primary structure comprises 186 residues: ADP-ribosylation factor-like protein 8B (186 aa).

Position 1 is an N-acetylmethionine (Met1). Residues 1–19 (MLALISRLLDWFRSLFWKE) constitute an intramembrane region (note=Mediates targeting to membranes). Residues 29 to 35 (QYSGKTT), 71 to 75 (DIGGQ), and 130 to 133 (NKRD) contribute to the GTP site. A Glycyl lysine isopeptide (Lys-Gly) (interchain with G-Cter in ubiquitin) cross-link involves residue Lys141.

The protein belongs to the small GTPase superfamily. Arf family. Interacts with tubulin. Interacts with BORCS5; recruits ARL8B to lysosomes. Interacts with VPS41; the interaction mediates the recruitment of the HOPS complex to lysosomes. Interacts (GTP-bound form) with PLEKHM2 (via RUN domain); the interaction is required to recruit the motor protein kinesin-1 on lysosomes. Interacts (GTP-bound form) with PLEKHM1 (via RUN domain); the interaction is required for PLEKHM1 localization to lysosomes and for ARL8B function in delivery and degradation of endocytic and autophagic cargo in lysosomes. PLEKHM1 and PLEKHM2 compete for interaction with ARL8B. Interacts (GTP-bound form) with RUFY1; the interaction is required for RUFY1 endosomal location. When GTP-bound, interacts with RUFY3 and RUFY4, but not with RUFY1, nor RUFY2. Ubiquitinated at Lys-141 by RNF167, leading to its degradation. As to expression, ubiquitously expressed.

The protein localises to the late endosome membrane. Its subcellular location is the lysosome membrane. It is found in the cytoplasm. The protein resides in the cytoskeleton. It localises to the spindle. The protein localises to the cell projection. Its subcellular location is the axon. It is found in the synapse. The protein resides in the cytolytic granule membrane. It localises to the early endosome membrane. The enzyme catalyses GTP + H2O = GDP + phosphate + H(+). Its function is as follows. Small GTPase which cycles between active GTP-bound and inactive GDP-bound states. In its active state, binds to a variety of effector proteins playing a key role in the regulation of lysosomal positioning which is important for nutrient sensing, natural killer cell-mediated cytotoxicity and antigen presentation. Along with its effectors, orchestrates lysosomal transport and fusion. Localizes specifically to lysosomal membranes and mediates anterograde lysosomal motility by recruiting PLEKHM2, which in turn recruits the motor protein kinesin-1 on lysosomes. Required for lysosomal and cytolytic granule exocytosis. Critical factor involved in NK cell-mediated cytotoxicity. Drives the polarization of cytolytic granules and microtubule-organizing centers (MTOCs) toward the immune synapse between effector NK lymphocytes and target cells. In neurons, mediates the anterograde axonal long-range transport of presynaptic lysosome-related vesicles required for presynaptic biogenesis and synaptic function. Also acts as a regulator of endosome to lysosome trafficking pathways of special significance for host defense. Recruits RUFY1 onto early endosomes regulating endosomes to trans-Golgi network proteins retrieval. Regulates cargo trafficking to lysosomes by binding to PLEKHM1 and recruiting the HOPS subunit VPS41, resulting in functional assembly of the HOPS complex on lysosomal membranes. Plays an important role in cargo delivery to lysosomes for antigen presentation and microbial killing. Directs the intersection of CD1d with lipid antigens in lysosomes, and plays a role in intersecting phagosomes with lysosomes to generate phagolysosomes that kill microbes. Involved in the process of MHC II presentation. Regulates the delivery of antigens to lysosomes and the formation of MHC II-peptide complexes through the recruitment of the HOPS complex to lysosomes allowing the fusion of late endosomes to lysosomes. May play a role in chromosome segregation. In terms of biological role, (Microbial infection) During Mycobacterium tuberculosis (Mtb) infection, is required for plasma membrane repair by controlling the exocytosis of lysosomes in macrophages. ARL8B secretion pathway is crucial to control the type of cell death of the M.tuberculosis-infected macrophages, distinguishing avirulent from virulent Mtb induced necrotic cell death. Functionally, (Microbial infection) During infection, coronaviruses such as SARS-CoV-2 and the chaperone HSPA5/GRP78 are probably co-released through ARL8B-dependent lysosomal exocytic pathway for unconventional egress. The sequence is that of ADP-ribosylation factor-like protein 8B from Homo sapiens (Human).